The chain runs to 150 residues: Ribonuclease HI (150 aa).

Residues 1–141 (MKLINAYTDG…VDVLARGQAM (141 aa)) enclose the RNase H type-1 domain. Residues Asp9, Glu47, Asp69, and Asp133 each coordinate Mg(2+).

Belongs to the RNase H family. In terms of assembly, monomer. Requires Mg(2+) as cofactor.

The protein resides in the cytoplasm. The catalysed reaction is Endonucleolytic cleavage to 5'-phosphomonoester.. Its function is as follows. Endonuclease that specifically degrades the RNA of RNA-DNA hybrids. This chain is Ribonuclease HI, found in Xylella fastidiosa (strain Temecula1 / ATCC 700964).